Reading from the N-terminus, the 243-residue chain is Myelin protein P0 (243 aa).

Positions 1–26 are cleaved as a signal peptide; sequence MESSGLRAPCSLLVLLSALVLPPTLA. One can recognise an Ig-like V-type domain in the interval 27–141; it reads IEVYTDREVY…VGKSSYVHLQ (115 aa). At 27-154 the chain is on the extracellular side; the sequence is IEVYTDREVY…KGAARAGLVL (128 aa). A disulfide bridge links Cys47 with Cys123. A glycan (N-linked (GlcNAc...) asparagine) is linked at Asn118. The chain crosses the membrane as a helical span at residues 155–175; that stretch reads GIIIAVALALVIVVTILILLI. The Cytoplasmic segment spans residues 176-243; that stretch reads RYCWLRRQVR…GIGDSRKDRK (68 aa). Residues 201-243 are disordered; sequence AKDSSKRSSRQTPILYAMLDQTRGKASEKKGKGGIGDSRKDRK. A compositionally biased stretch (basic and acidic residues) spans 222 to 243; that stretch reads TRGKASEKKGKGGIGDSRKDRK.

This sequence belongs to the myelin P0 protein family.

The protein localises to the cell membrane. Functionally, creation of an extracellular membrane face which guides the wrapping process and ultimately compacts adjacent lamellae. This is Myelin protein P0 (mpz) from Xenopus tropicalis (Western clawed frog).